Consider the following 434-residue polypeptide: Oxysterol-binding protein homolog 5 (434 aa).

The segment at S18–T371 is OSBP-related domain (ORD). L24 to A29 provides a ligand contact to a 1,2-diacyl-sn-glycero-3-phospho-(1D-myo-inositol 4-phosphate). Position 96 (Q96) interacts with 20-hydroxycholesterol. Position 96 (Q96) interacts with 25-hydroxycholesterol. Q96 and R100 together coordinate 7beta-hydroxycholesterol. Q96 provides a ligand contact to cholesterol. Q96 lines the ergosterol pocket. Residues K109–N112, H143–H144, K335, E339, and R343 contribute to the a 1,2-diacyl-sn-glycero-3-phospho-(1D-myo-inositol 4-phosphate) site. S389 is subject to Phosphoserine.

It belongs to the OSBP family.

It is found in the vacuole membrane. It localises to the bud neck. Its function is as follows. Lipid transport protein (LTP) involved in non-vesicular transfer of lipids between membranes. Functions in phosphoinositide-coupled directional transport of various lipids by carrying the lipid molecule in a hydrophobic pocket and transferring it between membranes through the cytosol. Involved in maintenance of intracellular sterol distribution and homeostasis. Plays a role in ergosterol synthesis. Binds and transports sterol. May be involved in ergosterol transport from the plasma membrane (PM) to the ER. This Saccharomyces cerevisiae (strain ATCC 204508 / S288c) (Baker's yeast) protein is Oxysterol-binding protein homolog 5.